The chain runs to 73 residues: Stigmurin (73 aa).

The N-terminal stretch at 1–22 (MQIKHLITLFFLVLIVADQCSA) is a signal peptide. Residue K39 is modified to Lysine amide. Positions 45-73 (EISAQIEQYKDLQKREAELEKLLDRLPMY) are excised as a propeptide.

The protein belongs to the non-disulfide-bridged peptide (NDBP) superfamily. Short antimicrobial peptide (group 4) family. As to expression, expressed by the venom gland.

It is found in the secreted. Antimicrobial peptide with activity against Gram-positive bacterial strains (S.aureus (MIC=2-140 uM), methicillin-resistant S.aureus (MRSA) (MIC=8-17 uM), S.epidermidis (MIC=1.17 uM), and the yeasts C.albicans, C.krusei, and C.glabrata (MIC=34-69 uM)). Acts by disrupting the cell membrane (observed on outer layer of the S.aureus). Is not active against Gram-negative bacteria (E.coli, E.Cloacae, P.aeruginosa), and the Gram-positive bacterium E.faecalis. Also shows toxicity against several cell lines, but possess low hemolytic activity at the highest concentration tested. Also shows antiparasitic activity against Trypanosoma cruzi by decreasing the viability of the epimastigote and trypomastigote forms of the parasite. Displays high hydroxyl radical scavenging activity (antioxidant action). In a wound infection model, the topical application of this peptide demonstrates antibacterial effects, as well as an ability to accelerate wound closure speed, which suggests the induction of tissue repair. In the model of polymicrobial sepsis, it exhibits an antibiotic effect, reducing the levels of microorganisms in the infectious focus and the inflammatory responses in the lung and cecum of septic animals. The chain is Stigmurin from Tityus stigmurus (Brazilian scorpion).